The sequence spans 348 residues: MTALALPRLGVTLYSFTPYYHAREYSFEDLIRIAGERDLGPGLEIVGYQSIKGFPKLPDGFVKDFRRRVDEAGLELSAMGANADAGIPHDRLLNEDELTEYMAHQLHTAKELGFPIVRVQHSVTPDLMERLLPLAEKLDLTMGMEIHSPHSVHHPKIQALVERYEKLGSPHLGFIPDWGASLTRLPPSALQTYAAADVPRELLDAYDRQWDVFHAEGVITTDAEQGAQFRRMRELNERFGGDDVSVRIGTNAVGLFGHQRPEDWSAIMPWVVHVHGKFYGIDENGEEPSVPHGLLLRQLVDAGYTGYISSEWEGWHWNTTDDPFEMVAWQHRLMRRIFGEIEAEAGVR.

Glu-145 is a binding site for Mg(2+). Catalysis depends on His-147, which acts as the Proton acceptor. 3 residues coordinate Mg(2+): Asp-177, His-275, and Glu-311.

This sequence belongs to the C-glycoside deglycosidase alpha subunit family. As to quaternary structure, heterodimer composed of an alpha subunit (CarB) and a beta subunit (CarC). Mg(2+) serves as cofactor.

The enzyme catalyses 3'-dehydrocarminate + H(+) = kermesate + 1,5-anhydro-D-erythro-hex-1-en-3-ulose. With respect to regulation, activity is strongly reduced in the presence of chelating agents. Its function is as follows. Carbon-carbon bond-cleaving enzyme which participates in a carminate degradation pathway. Cleaves the C-C bond in 3'-dehydrocarminate to form kermesate. Also shows weak activity with other C-glycosides, such as 3''-dehydropuerarin (3''-oxo-puerarin), 3''-dehydroisoorientin (3''-oxo-homoorientin) and 3'-dehydromangiferin (3'-oxo-mangiferin). The protein is 3'-dehydrocarminate deglycosidase alpha subunit of Microbacterium sp.